The primary structure comprises 197 residues: Imidazoleglycerol-phosphate dehydratase (197 aa).

This sequence belongs to the imidazoleglycerol-phosphate dehydratase family.

It localises to the cytoplasm. It carries out the reaction D-erythro-1-(imidazol-4-yl)glycerol 3-phosphate = 3-(imidazol-4-yl)-2-oxopropyl phosphate + H2O. It participates in amino-acid biosynthesis; L-histidine biosynthesis; L-histidine from 5-phospho-alpha-D-ribose 1-diphosphate: step 6/9. The protein is Imidazoleglycerol-phosphate dehydratase of Methylocella silvestris (strain DSM 15510 / CIP 108128 / LMG 27833 / NCIMB 13906 / BL2).